Reading from the N-terminus, the 574-residue chain is Proline--tRNA ligase (574 aa).

Belongs to the class-II aminoacyl-tRNA synthetase family. ProS type 1 subfamily. As to quaternary structure, homodimer.

Its subcellular location is the cytoplasm. The catalysed reaction is tRNA(Pro) + L-proline + ATP = L-prolyl-tRNA(Pro) + AMP + diphosphate. Its function is as follows. Catalyzes the attachment of proline to tRNA(Pro) in a two-step reaction: proline is first activated by ATP to form Pro-AMP and then transferred to the acceptor end of tRNA(Pro). As ProRS can inadvertently accommodate and process non-cognate amino acids such as alanine and cysteine, to avoid such errors it has two additional distinct editing activities against alanine. One activity is designated as 'pretransfer' editing and involves the tRNA(Pro)-independent hydrolysis of activated Ala-AMP. The other activity is designated 'posttransfer' editing and involves deacylation of mischarged Ala-tRNA(Pro). The misacylated Cys-tRNA(Pro) is not edited by ProRS. In Aeromonas hydrophila subsp. hydrophila (strain ATCC 7966 / DSM 30187 / BCRC 13018 / CCUG 14551 / JCM 1027 / KCTC 2358 / NCIMB 9240 / NCTC 8049), this protein is Proline--tRNA ligase.